Here is a 176-residue protein sequence, read N- to C-terminus: NAD(P)H-quinone oxidoreductase subunit 6, chloroplastic (176 aa).

Helical transmembrane passes span 10–30, 32–52, 61–81, 95–115, and 152–172; these read FLLVFLGLGLILGGLGVVLLT, PIYSAFSLGLVLVCISLFYIL, AQLLIYVGAINVLIIFAVMFM, VGSGVTSLVCTSIFVSLITII, and FFLPFEFISIILLVALIGAIA.

It belongs to the complex I subunit 6 family. In terms of assembly, NDH is composed of at least 16 different subunits, 5 of which are encoded in the nucleus.

The protein resides in the plastid. Its subcellular location is the chloroplast thylakoid membrane. The catalysed reaction is a plastoquinone + NADH + (n+1) H(+)(in) = a plastoquinol + NAD(+) + n H(+)(out). The enzyme catalyses a plastoquinone + NADPH + (n+1) H(+)(in) = a plastoquinol + NADP(+) + n H(+)(out). NDH shuttles electrons from NAD(P)H:plastoquinone, via FMN and iron-sulfur (Fe-S) centers, to quinones in the photosynthetic chain and possibly in a chloroplast respiratory chain. The immediate electron acceptor for the enzyme in this species is believed to be plastoquinone. Couples the redox reaction to proton translocation, and thus conserves the redox energy in a proton gradient. The chain is NAD(P)H-quinone oxidoreductase subunit 6, chloroplastic (ndhG) from Manihot esculenta (Cassava).